Reading from the N-terminus, the 394-residue chain is Lipoyl synthase, chloroplastic (394 aa).

Residues 1–36 (MMHHCSITKPTFSISISTQKLHHHSSKFLNLGFRIR) constitute a chloroplast transit peptide. 7 residues coordinate [4Fe-4S] cluster: C127, C132, C138, C158, C162, C165, and S373. A Radical SAM core domain is found at 141–362 (GGGDGVATAT…KTYGESIGFR (222 aa)).

Belongs to the radical SAM superfamily. Lipoyl synthase family. [4Fe-4S] cluster is required as a cofactor. Expressed in roots, leaves and flowers.

It localises to the plastid. The protein localises to the chloroplast. The enzyme catalyses [[Fe-S] cluster scaffold protein carrying a second [4Fe-4S](2+) cluster] + N(6)-octanoyl-L-lysyl-[protein] + 2 oxidized [2Fe-2S]-[ferredoxin] + 2 S-adenosyl-L-methionine + 4 H(+) = [[Fe-S] cluster scaffold protein] + N(6)-[(R)-dihydrolipoyl]-L-lysyl-[protein] + 4 Fe(3+) + 2 hydrogen sulfide + 2 5'-deoxyadenosine + 2 L-methionine + 2 reduced [2Fe-2S]-[ferredoxin]. It participates in protein modification; protein lipoylation via endogenous pathway; protein N(6)-(lipoyl)lysine from octanoyl-[acyl-carrier-protein]: step 2/2. In terms of biological role, catalyzes the radical-mediated insertion of two sulfur atoms into the C-6 and C-8 positions of the octanoyl moiety bound to the lipoyl domains of lipoate-dependent enzymes, thereby converting the octanoylated domains into lipoylated derivatives. Together with LIP2P and LIP2P2 is essential for de novo plastidial protein lipoylation during seed development. The chain is Lipoyl synthase, chloroplastic from Arabidopsis thaliana (Mouse-ear cress).